The chain runs to 174 residues: Early E1A protein (174 aa).

The tract at residues proline 40–leucine 48 is interaction with RB1 in competition with E2F1. An LXCXE motif, interaction with host RB1 motif is present at residues leucine 106–glutamate 110. Residues cysteine 145–cysteine 163 fold into a zinc finger.

This sequence belongs to the adenoviridae E1A protein family. Interacts with host UBE2I; this interaction interferes with polySUMOylation. Interacts with host RB1; this interaction induces the aberrant dissociation of RB1-E2F1 complex thereby disrupting the activity of RB1 and activating E2F1-regulated genes. Interacts with host ATF7; the interaction enhances ATF7-mediated viral transactivation activity which requires the zinc binding domains of both proteins. Isoform early E1A 32 kDa protein and isoform early E1A 26 kDa protein interact (via N-terminus) with CUL1 and E3 ubiquitin ligase RBX1; these interactions inhibit RBX1-CUL1-dependent elongation reaction of ubiquitin chains and attenuate ubiquitination of SCF(FBXW7) target proteins. Interacts (via PXLXP motif) with host ZMYND11/BS69 (via MYND-type zinc finger); this interaction inhibits E1A mediated transactivation. Interacts with host EP300; this interaction stimulates the acetylation of RB1 by recruiting EP300 and RB1 into a multimeric-protein complex. Interacts with host CTBP1 and CTBP2; this interaction seems to potentiate viral replication. Interacts with host DCAF7. Interacts with host DYRK1A. Interacts with host KPNA4; this interaction allows E1A import into the host nucleus. Interacts with host EP400; this interaction stabilizes MYC. Interacts with host TBP protein; this interaction probably disrupts the TBP-TATA complex.

It is found in the host nucleus. Functionally, plays a role in viral genome replication by driving entry of quiescent cells into the cell cycle. Stimulation of progression from G1 to S phase allows the virus to efficiently use the cellular DNA replicating machinery to achieve viral genome replication. E1A protein has both transforming and trans-activating activities. Induces the disassembly of the E2F1 transcription factor from RB1 by direct competition for the same binding site on RB1, with subsequent transcriptional activation of E2F1-regulated S-phase genes and of the E2 region of the adenoviral genome. Release of E2F1 leads to the ARF-mediated inhibition of MDM2 and causes TP53/p53 to accumulate because it is not targeted for degradation by MDM2-mediated ubiquitination anymore. This increase in TP53, in turn, would arrest the cell proliferation and direct its death but this effect is counteracted by the viral protein E1B-55K. Inactivation of the ability of RB1 to arrest the cell cycle is critical for cellular transformation, uncontrolled cellular growth and proliferation induced by viral infection. Interaction with RBX1 and CUL1 inhibits ubiquitination of the proteins targeted by SCF(FBXW7) ubiquitin ligase complex, and may be linked to unregulated host cell proliferation. The tumorigenesis-restraining activity of E1A may be related to the disruption of the host CtBP-CtIP complex through the CtBP binding motif. This chain is Early E1A protein, found in Canine adenovirus serotype 1 (strain RI261) (CAdV-1).